A 238-amino-acid chain; its full sequence is Endonuclease III homolog (238 aa).

Positions 129-155 (REKGLPREMKDLISLPGIGNKMALLYM) constitute a HhH domain. Lysine 149 functions as the Nucleophile; for N-glycosylase activity in the catalytic mechanism. Positions 217, 224, 227, and 233 each coordinate [4Fe-4S] cluster.

Belongs to the Nth/MutY family. [4Fe-4S] cluster serves as cofactor.

It localises to the nucleus. The protein resides in the mitochondrion. It catalyses the reaction 2'-deoxyribonucleotide-(2'-deoxyribose 5'-phosphate)-2'-deoxyribonucleotide-DNA = a 3'-end 2'-deoxyribonucleotide-(2,3-dehydro-2,3-deoxyribose 5'-phosphate)-DNA + a 5'-end 5'-phospho-2'-deoxyribonucleoside-DNA + H(+). Functionally, bifunctional DNA N-glycosylase with associated apurinic/apyrimidinic (AP) lyase function that catalyzes the first step in base excision repair (BER), the primary repair pathway for the repair of oxidative DNA damage. The DNA N-glycosylase activity releases the damaged DNA base from DNA by cleaving the N-glycosidic bond, leaving an AP site. The AP lyase activity cleaves the phosphodiester bond 3' to the AP site by a beta-elimination. Primarily recognizes and repairs oxidative base damage of pyrimidines. In Encephalitozoon cuniculi (strain GB-M1) (Microsporidian parasite), this protein is Endonuclease III homolog.